A 360-amino-acid chain; its full sequence is DNA replication and repair protein RecF (360 aa).

30-37 (GDNAQGKT) is a binding site for ATP.

This sequence belongs to the RecF family.

The protein localises to the cytoplasm. In terms of biological role, the RecF protein is involved in DNA metabolism; it is required for DNA replication and normal SOS inducibility. RecF binds preferentially to single-stranded, linear DNA. It also seems to bind ATP. In Lachnoclostridium phytofermentans (strain ATCC 700394 / DSM 18823 / ISDg) (Clostridium phytofermentans), this protein is DNA replication and repair protein RecF.